The primary structure comprises 336 residues: Ketol-acid reductoisomerase (NADP(+)) (336 aa).

The KARI N-terminal Rossmann domain occupies 2–182; the sequence is AKIYYQQDCN…GGARAGVLET (181 aa). Residues 25–28, serine 51, serine 53, and 83–86 each bind NADP(+); these read YGSQ and DEKQ. Histidine 108 is a catalytic residue. Glycine 134 contacts NADP(+). The KARI C-terminal knotted domain maps to 183–328; the sequence is TFREETETDL…AELRGLMSWT (146 aa). Mg(2+) is bound by residues aspartate 191, glutamate 195, glutamate 227, and glutamate 231. Serine 252 is a substrate binding site.

The protein belongs to the ketol-acid reductoisomerase family. Mg(2+) serves as cofactor.

The enzyme catalyses (2R)-2,3-dihydroxy-3-methylbutanoate + NADP(+) = (2S)-2-acetolactate + NADPH + H(+). It carries out the reaction (2R,3R)-2,3-dihydroxy-3-methylpentanoate + NADP(+) = (S)-2-ethyl-2-hydroxy-3-oxobutanoate + NADPH + H(+). The protein operates within amino-acid biosynthesis; L-isoleucine biosynthesis; L-isoleucine from 2-oxobutanoate: step 2/4. It participates in amino-acid biosynthesis; L-valine biosynthesis; L-valine from pyruvate: step 2/4. Functionally, involved in the biosynthesis of branched-chain amino acids (BCAA). Catalyzes an alkyl-migration followed by a ketol-acid reduction of (S)-2-acetolactate (S2AL) to yield (R)-2,3-dihydroxy-isovalerate. In the isomerase reaction, S2AL is rearranged via a Mg-dependent methyl migration to produce 3-hydroxy-3-methyl-2-ketobutyrate (HMKB). In the reductase reaction, this 2-ketoacid undergoes a metal-dependent reduction by NADPH to yield (R)-2,3-dihydroxy-isovalerate. The protein is Ketol-acid reductoisomerase (NADP(+)) of Lachnoclostridium phytofermentans (strain ATCC 700394 / DSM 18823 / ISDg) (Clostridium phytofermentans).